A 224-amino-acid polypeptide reads, in one-letter code: Protein LURP-one-related 1 (224 aa).

Positions 1–23 (MQQPYEYRYPQGTGPSAPPPPPK) are disordered.

The protein belongs to the LOR family.

Its function is as follows. Might be related to the phospholipid scramblase and tubby-like superfamily of membrane tethered transcription factors. This is Protein LURP-one-related 1 from Arabidopsis thaliana (Mouse-ear cress).